A 170-amino-acid polypeptide reads, in one-letter code: Protein SprT (170 aa).

Positions 23 to 165 (QLANQHLGTD…RECGEKLQFV (143 aa)) constitute a SprT-like domain. His-78 contacts Zn(2+). Residue Glu-79 is part of the active site. His-82 is a Zn(2+) binding site.

Belongs to the SprT family. It depends on Zn(2+) as a cofactor.

It is found in the cytoplasm. This chain is Protein SprT, found in Yersinia enterocolitica serotype O:8 / biotype 1B (strain NCTC 13174 / 8081).